A 194-amino-acid polypeptide reads, in one-letter code: Ribosomal RNA small subunit methyltransferase G (194 aa).

S-adenosyl-L-methionine-binding positions include Gly-70, Tyr-75, 121–122, and Arg-135; that span reads VE.

The protein belongs to the methyltransferase superfamily. RNA methyltransferase RsmG family.

The protein resides in the cytoplasm. The catalysed reaction is guanosine(527) in 16S rRNA + S-adenosyl-L-methionine = N(7)-methylguanosine(527) in 16S rRNA + S-adenosyl-L-homocysteine. Its function is as follows. Specifically methylates the N7 position of guanine in position 527 of 16S rRNA. In Aliarcobacter butzleri (strain RM4018) (Arcobacter butzleri), this protein is Ribosomal RNA small subunit methyltransferase G.